A 189-amino-acid chain; its full sequence is Transcription factor FapR (189 aa).

The protein belongs to the FapR family.

In terms of biological role, transcriptional factor involved in regulation of membrane lipid biosynthesis by repressing genes involved in fatty acid and phospholipid metabolism. This chain is Transcription factor FapR, found in Listeria welshimeri serovar 6b (strain ATCC 35897 / DSM 20650 / CCUG 15529 / CIP 8149 / NCTC 11857 / SLCC 5334 / V8).